We begin with the raw amino-acid sequence, 362 residues long: N-acylethanolamine-hydrolyzing acid amidase (362 aa).

The signal sequence occupies residues 1–33 (MGTLATRAACHGAHLALALLLLLSLSGPWLSAV). Asn-42 and Asn-112 each carry an N-linked (GlcNAc...) asparagine glycan. Residue Cys-131 is the Nucleophile of the active site. Residues Asn-314 and Asn-338 are each glycosylated (N-linked (GlcNAc...) asparagine).

Belongs to the acid ceramidase family. Heterodimer of an alpha and a beta subunit, produced by autocatalytic cleavage. In terms of processing, N-glycosylated. Tunicamycin treatment causes a reduction in specific activity against N-palmitoylethanolamine. Post-translationally, autoproteolytic cleavage at pH 4.5 gives rise to the alpha and beta subunit. Cleavage gives rise to a conformation change that activates the enzyme. The same catalytic Cys residue mediates the autoproteolytic cleavage and subsequent hydrolysis of lipid substrates.

It is found in the lysosome. The protein localises to the membrane. It carries out the reaction N-hexadecanoylethanolamine + H2O = ethanolamine + hexadecanoate. It catalyses the reaction an N-(long-chain fatty acyl)ethanolamine + H2O = a long-chain fatty acid + ethanolamine. The enzyme catalyses N-dodecanoylethanolamine + H2O = dodecanoate + ethanolamine. The catalysed reaction is N-tetradecanoylethanolamine + H2O = tetradecanoate + ethanolamine. It carries out the reaction an N-acylsphing-4-enine + H2O = sphing-4-enine + a fatty acid. It catalyses the reaction N-hexadecanoylsphing-4-enine + H2O = sphing-4-enine + hexadecanoate. The enzyme catalyses N-dodecanoylsphing-4-enine + H2O = dodecanoate + sphing-4-enine. It participates in lipid metabolism; fatty acid metabolism. Functionally, degrades bioactive fatty acid amides to their corresponding acids, with the following preference: N-palmitoylethanolamine &gt; N-myristoylethanolamine &gt; N-stearoylethanolamine &gt; N-oleoylethanolamine &gt; N-linoleoylethanolamine &gt; N-arachidonoylethanolamine. The protein is N-acylethanolamine-hydrolyzing acid amidase of Mus musculus (Mouse).